A 313-amino-acid chain; its full sequence is ADP-L-glycero-D-manno-heptose-6-epimerase (313 aa).

NADP(+) contacts are provided by residues 10–11 (MI), 31–32 (DN), lysine 38, lysine 53, 75–79 (EGACS), and asparagine 92. The active-site Proton acceptor is tyrosine 139. NADP(+) is bound at residue lysine 143. Asparagine 174 is a substrate binding site. Positions 175 and 183 each coordinate NADP(+). Lysine 183 functions as the Proton acceptor in the catalytic mechanism. Residues serine 185, histidine 192, 206–209 (FEGS), arginine 214, and tyrosine 277 each bind substrate.

This sequence belongs to the NAD(P)-dependent epimerase/dehydratase family. HldD subfamily. In terms of assembly, homopentamer. NADP(+) serves as cofactor.

It catalyses the reaction ADP-D-glycero-beta-D-manno-heptose = ADP-L-glycero-beta-D-manno-heptose. Its pathway is nucleotide-sugar biosynthesis; ADP-L-glycero-beta-D-manno-heptose biosynthesis; ADP-L-glycero-beta-D-manno-heptose from D-glycero-beta-D-manno-heptose 7-phosphate: step 4/4. Its function is as follows. Catalyzes the interconversion between ADP-D-glycero-beta-D-manno-heptose and ADP-L-glycero-beta-D-manno-heptose via an epimerization at carbon 6 of the heptose. This chain is ADP-L-glycero-D-manno-heptose-6-epimerase, found in Aliivibrio fischeri (strain ATCC 700601 / ES114) (Vibrio fischeri).